The following is a 441-amino-acid chain: ATP-dependent RNA helicase sub2 (441 aa).

A compositionally biased stretch (low complexity) spans 23-32 (TTAAPAANGD). The tract at residues 23–42 (TTAAPAANGDAAKKGDLTVS) is disordered. Positions 58-86 (TGFRDFLLKGELLRAITDCGFEHPSEVQQ) match the Q motif motif. The 176-residue stretch at 89 to 264 (IPTAILNVDV…KKFMRNPLEV (176 aa)) folds into the Helicase ATP-binding domain. Residue 102 to 109 (AKSGLGKT) coordinates ATP. The DECD box motif lies at 211–214 (DECD). The Helicase C-terminal domain maps to 292–437 (KLNELLDSLE…EYPEGGVDSS (146 aa)).

The protein belongs to the DEAD box helicase family. DECD subfamily.

It localises to the nucleus. The catalysed reaction is ATP + H2O = ADP + phosphate + H(+). ATP-binding RNA helicase involved in transcription elongation and required for the export of mRNA out of the nucleus. SUB2 also plays a role in pre-mRNA splicing and spliceosome assembly. May be involved in rDNA and telomeric silencing, and maintenance of genome integrity. The protein is ATP-dependent RNA helicase sub2 (sub2) of Aspergillus oryzae (strain ATCC 42149 / RIB 40) (Yellow koji mold).